The sequence spans 515 residues: MNPDLDTGHNTSAPAHWGELKDDNFTGPNQTSSNSTLPQLDVTRAISVGLVLGAFILFAIVGNILVILSVACNRHLRTPTNYFIVNLAIADLLLSFTVLPFSATLEVLGYWVLGRIFCDIWAAVDVLCCTASILSLCAISIDRYIGVRYSLQYPTLVTRRKAILALLSVWVLSTVISIGPLLGWKEPAPNDDKECGVTEEPFYALFSSLGSFYIPLAVILVMYCRVYIVAKRTTKNLEAGVMKEMSNSKELTLRIHSKNFHEDTLSSTKAKGHNPRSSIAVKLFKFSREKKAAKTLGIVVGMFILCWLPFFIALPLGSLFSTLKPPDAVFKVVFWLGYFNSCLNPIIYPCSSKEFKRAFMRILGCQCRGGRRRRRRRRLGACAYTYRPWTRGGSLERSQSRKDSLDDSGSCMSGTQRTLPSASPSPGYLGRGTQPPVELCAFPEWKPGALLSLPEPPGRRGRLDSGPLFTFKLLGDPESPGTEGDTSNGGCDTTTDLANGQPGFKSNMPLAPGHF.

Residues 1–45 (MNPDLDTGHNTSAPAHWGELKDDNFTGPNQTSSNSTLPQLDVTRA) are Extracellular-facing. Residues Asn-10, Asn-24, and Asn-34 are each glycosylated (N-linked (GlcNAc...) asparagine). Residues 46–70 (ISVGLVLGAFILFAIVGNILVILSV) traverse the membrane as a helical segment. Over 71–83 (ACNRHLRTPTNYF) the chain is Cytoplasmic. A helical transmembrane segment spans residues 84 to 105 (IVNLAIADLLLSFTVLPFSATL). Residues 106-115 (EVLGYWVLGR) are Extracellular-facing. The helical transmembrane segment at 116–141 (IFCDIWAAVDVLCCTASILSLCAISI) threads the bilayer. An intrachain disulfide couples Cys-118 to Cys-195. Over 142 to 161 (DRYIGVRYSLQYPTLVTRRK) the chain is Cytoplasmic. The chain crosses the membrane as a helical span at residues 162–182 (AILALLSVWVLSTVISIGPLL). Over 183-201 (GWKEPAPNDDKECGVTEEP) the chain is Extracellular. The chain crosses the membrane as a helical span at residues 202 to 224 (FYALFSSLGSFYIPLAVILVMYC). Over 225-295 (RVYIVAKRTT…FSREKKAAKT (71 aa)) the chain is Cytoplasmic. Thr-264 carries the post-translational modification Phosphothreonine. Residues 296–319 (LGIVVGMFILCWLPFFIALPLGSL) traverse the membrane as a helical segment. Residues 320–326 (FSTLKPP) are Extracellular-facing. A helical membrane pass occupies residues 327–351 (DAVFKVVFWLGYFNSCLNPIIYPCS). At 352-515 (SKEFKRAFMR…SNMPLAPGHF (164 aa)) the chain is on the cytoplasmic side. Cys-365 carries S-palmitoyl cysteine lipidation. Positions 368-378 (RGGRRRRRRRR) match the Nuclear localization signal motif. Disordered regions lie at residues 392-430 (GGSL…GYLG) and 474-515 (LGDP…PGHF). Polar residues-rich tracts occupy residues 410–424 (SCMS…SASP) and 484–498 (GDTS…TDLA).

The protein belongs to the G-protein coupled receptor 1 family. Adrenergic receptor subfamily. ADRA1B sub-subfamily. As to quaternary structure, homo- and heterooligomer. Heterooligomerizes with ADRA1B homooligomers in cardiac myocytes. Interacts with CAVIN4.

The protein localises to the nucleus membrane. It localises to the cell membrane. The protein resides in the cytoplasm. Its subcellular location is the membrane. It is found in the caveola. This alpha-adrenergic receptor mediates its action by association with G proteins that activate a phosphatidylinositol-calcium second messenger system. Its effect is mediated by G(q) and G(11) proteins. Nuclear ADRA1A-ADRA1B heterooligomers regulate phenylephrine (PE)-stimulated ERK signaling in cardiac myocytes. In Rattus norvegicus (Rat), this protein is Alpha-1B adrenergic receptor (Adra1b).